Here is a 156-residue protein sequence, read N- to C-terminus: Small ribosomal subunit protein uS7 (156 aa).

This sequence belongs to the universal ribosomal protein uS7 family. As to quaternary structure, part of the 30S ribosomal subunit. Contacts proteins S9 and S11.

Functionally, one of the primary rRNA binding proteins, it binds directly to 16S rRNA where it nucleates assembly of the head domain of the 30S subunit. Is located at the subunit interface close to the decoding center, probably blocks exit of the E-site tRNA. The polypeptide is Small ribosomal subunit protein uS7 (Brucella abortus (strain S19)).